Here is a 642-residue protein sequence, read N- to C-terminus: 1-deoxy-D-xylulose-5-phosphate synthase 2 (642 aa).

Thiamine diphosphate-binding positions include histidine 79 and 120–122 (AHS). Aspartate 155 is a binding site for Mg(2+). Thiamine diphosphate-binding positions include 156–157 (GS), asparagine 184, tyrosine 293, and glutamate 375. Asparagine 184 contacts Mg(2+).

The protein belongs to the transketolase family. DXPS subfamily. As to quaternary structure, homodimer. Requires Mg(2+) as cofactor. Thiamine diphosphate serves as cofactor.

It carries out the reaction D-glyceraldehyde 3-phosphate + pyruvate + H(+) = 1-deoxy-D-xylulose 5-phosphate + CO2. It participates in metabolic intermediate biosynthesis; 1-deoxy-D-xylulose 5-phosphate biosynthesis; 1-deoxy-D-xylulose 5-phosphate from D-glyceraldehyde 3-phosphate and pyruvate: step 1/1. Functionally, catalyzes the acyloin condensation reaction between C atoms 2 and 3 of pyruvate and glyceraldehyde 3-phosphate to yield 1-deoxy-D-xylulose-5-phosphate (DXP). In Roseobacter denitrificans (strain ATCC 33942 / OCh 114) (Erythrobacter sp. (strain OCh 114)), this protein is 1-deoxy-D-xylulose-5-phosphate synthase 2.